We begin with the raw amino-acid sequence, 315 residues long: Malate dehydrogenase (315 aa).

Residues 7–12 (GAGNIG) and D32 contribute to the NAD(+) site. 2 residues coordinate substrate: R81 and R87. NAD(+) is bound by residues N94 and 117–119 (VTN). The substrate site is built by N119 and R150. H174 serves as the catalytic Proton acceptor.

It belongs to the LDH/MDH superfamily. MDH type 3 family.

It catalyses the reaction (S)-malate + NAD(+) = oxaloacetate + NADH + H(+). Catalyzes the reversible oxidation of malate to oxaloacetate. This chain is Malate dehydrogenase, found in Neorickettsia sennetsu (strain ATCC VR-367 / Miyayama) (Ehrlichia sennetsu).